A 157-amino-acid chain; its full sequence is Protein Smg (157 aa).

The protein belongs to the Smg family.

The sequence is that of Protein Smg from Yersinia pseudotuberculosis serotype O:1b (strain IP 31758).